The primary structure comprises 119 residues: Ghilanten (119 aa).

Glutamine 1 is modified (pyrrolidone carboxylic acid). Intrachain disulfides connect cysteine 8–cysteine 19, cysteine 13–cysteine 26, cysteine 28–cysteine 48, cysteine 33–cysteine 51, cysteine 37–cysteine 53, cysteine 62–cysteine 73, cysteine 67–cysteine 80, cysteine 82–cysteine 103, cysteine 88–cysteine 106, and cysteine 92–cysteine 108. An Antistasin-like 1 domain is found at 28–53; the sequence is CPEVRCRVYCSHGFQRSRYGCEVCRC. The region spanning 83–108 is the Antistasin-like 2 domain; it reads KIDINCRKTCPNGLKRDKLGCEYCEC. Heparin contacts are provided by residues 97 to 100 and 111 to 118; these read KRDK and KRKLVPRL.

The protein belongs to the protease inhibitor I15 (antistasin) family.

It is found in the secreted. In terms of biological role, this highly disulfide-bonded protein is a potent inhibitor of factor Xa. May have therapeutic utility as an anticoagulant. Also exhibits a strong metastatic activity. In Haementeria ghilianii (Amazon leech), this protein is Ghilanten.